Reading from the N-terminus, the 912-residue chain is MNWIFNTLIQFLEDLNIDPSVVSLIDEDAKKLEEQFPKALKHPVVDEEIVYKILCEKYNLNALNVKTISETLNKEYKFGRNSKTALKKYLDYGKEEYLIQFFNTLMLENNTYIDREYIESVLAFCEPVSKEKIKNEFIKLWNEANEVNEYGKLKDYLLGIYSKLFSMGLENLRLIEIYNSNESLIKKVFKYESTIKELKEYCLSNQESITAGLAIKMFNEKYMELMKKEYQQDAIALKLEEHMNQLYVDNNINEYPYIFDRGNDILLLPTEEYDFVYFHIDQDFFNRFQDENKFLDYVLSSIKQIYRVLANEKVFALKIDNIYNNEKNLKWELYPKLTIYSEHFIQTKETARFYKAYDIAKDLLSKHEFRLLENDSEKNRENILKEYFSGKISEDELFSLVHVNMKKEHFFEFLNRFKYVHYGFTFNDCLVLDRVDKSFANGELENVISNATEILLIFYKFRADQRRIPCPSCGSLNISGNSYPEINNRSWECKSPYCPDRSKSNRGKRYSKKSNYMQWGAIYPKSHDIIPRELIKKWRRDIIVINNEQEIFEMLVKYFSFTDEKLLFINTNELPSVVTERENRKVVILSQKLKEKAYTSNVVVKESLEGEIEFFKNGLYLKNFTELYLPEDQRRVSPEINNFLNSGGRLKLIQGDSYEVLKSVEDNTFAAAVTSPPYYNAREYSQWPNLYLYFNDMYNIIKECFRTLKPGSVFLYNIADIVDNENIIVKSSMGNKRIPLGAYTIYFFQKAGFELLDNIIWDKGEPQSNRQKNDGKFTPHYQKPLNAYEHMFIFKKTGAPLTLSDDWQSKRGSWIKNIVPFQPVFKINSKGENILGHTAPFPEDIPRFVANVFTKHDNDIILDPFSGSLTSAIASYKSNRIGLGIELSPDYVELSRDRALLEGVTTKILNFN.

Belongs to the N(4)/N(6)-methyltransferase family. N(4) subfamily.

The enzyme catalyses a 2'-deoxycytidine in DNA + S-adenosyl-L-methionine = an N(4)-methyl-2'-deoxycytidine in DNA + S-adenosyl-L-homocysteine + H(+). A beta subtype methylase. Recognizes the double-stranded sequence 5'-CCN(7)GG-3', methylates C-2 on both strands, and protects the DNA from cleavage by the BslI endonuclease. The polypeptide is Type II beta methyltransferase M.BslI (bslIM) (Bacillus sp. (strain NEB-606)).